The sequence spans 740 residues: Ribosomal protein S6 kinase alpha-3 (740 aa).

The interval 1-38 is disordered; it reads MPLAQLADPWQKMAVESPSDSAENGQQIMDEPMGEEEI. Residues 18-27 show a composition bias toward polar residues; sequence PSDSAENGQQ. The region spanning 68–327 is the Protein kinase 1 domain; the sequence is FELLKVLGQG…VEEIKRHSFF (260 aa). ATP is bound by residues 74-82 and K100; that span reads LGQGSFGKV. D193 (proton acceptor) is an active-site residue. At S227 the chain carries Phosphoserine; by PDPK1. The 70-residue stretch at 328–397 folds into the AGC-kinase C-terminal domain; that stretch reads STIDWNKLYR…VAITSDDESQ (70 aa). T365 carries the phosphothreonine modification. S369 and S375 each carry phosphoserine. S386 carries the post-translational modification Phosphoserine; by autocatalysis and MAPKAPK2. S415 is modified (phosphoserine). The region spanning 422-679 is the Protein kinase 2 domain; the sequence is YEVKEDIGVG…AALVLRHPWI (258 aa). Residues 428–436 and K451 each bind ATP; that span reads IGVGSYSVC. Y529 carries the phosphotyrosine; by FGFR3 modification. D539 functions as the Proton acceptor in the catalytic mechanism. Phosphoserine is present on residues S556 and S715.

It belongs to the protein kinase superfamily. AGC Ser/Thr protein kinase family. S6 kinase subfamily. In terms of assembly, forms a complex with either MAPK1/ERK2 or MAPK3/ERK1 in quiescent cells. Transiently dissociates following mitogenic stimulation. Interacts with NFATC4, ETV1/ER81 and FGFR1. Mg(2+) is required as a cofactor. Post-translationally, activated by phosphorylation at Ser-227 by PDPK1. Autophosphorylated on Ser-386, as part of the activation process. May be phosphorylated at Thr-365 and Ser-369 by MAPK1/ERK2 and MAPK3/ERK1. Can also be activated via phosphorylation at Ser-386 by MAPKAPK2. N-terminal myristoylation results in an activated kinase in the absence of added growth factors. Expressed in many tissues, highest levels in skeletal muscle.

It localises to the nucleus. The protein resides in the cytoplasm. It carries out the reaction L-seryl-[protein] + ATP = O-phospho-L-seryl-[protein] + ADP + H(+). The catalysed reaction is L-threonyl-[protein] + ATP = O-phospho-L-threonyl-[protein] + ADP + H(+). With respect to regulation, upon extracellular signal or mitogen stimulation, phosphorylated at Thr-577 in the C-terminal kinase domain (CTKD) by MAPK1/ERK2 and MAPK3/ERK1. The activated CTKD then autophosphorylates Ser-386, allowing binding of PDPK1, which in turn phosphorylates Ser-227 in the N-terminal kinase domain (NTDK) leading to the full activation of the protein and subsequent phosphorylation of the substrates by the NTKD. Serine/threonine-protein kinase that acts downstream of ERK (MAPK1/ERK2 and MAPK3/ERK1) signaling and mediates mitogenic and stress-induced activation of the transcription factors CREB1, ETV1/ER81 and NR4A1/NUR77, regulates translation through RPS6 and EIF4B phosphorylation, and mediates cellular proliferation, survival, and differentiation by modulating mTOR signaling and repressing pro-apoptotic function of BAD and DAPK1. In fibroblast, is required for EGF-stimulated phosphorylation of CREB1 and histone H3 at 'Ser-10', which results in the subsequent transcriptional activation of several immediate-early genes. In response to mitogenic stimulation (EGF and PMA), phosphorylates and activates NR4A1/NUR77 and ETV1/ER81 transcription factors and the cofactor CREBBP. Upon insulin-derived signal, acts indirectly on the transcription regulation of several genes by phosphorylating GSK3B at 'Ser-9' and inhibiting its activity. Phosphorylates RPS6 in response to serum or EGF via an mTOR-independent mechanism and promotes translation initiation by facilitating assembly of the preinitiation complex. In response to insulin, phosphorylates EIF4B, enhancing EIF4B affinity for the EIF3 complex and stimulating cap-dependent translation. Is involved in the mTOR nutrient-sensing pathway by directly phosphorylating TSC2 at 'Ser-1798', which potently inhibits TSC2 ability to suppress mTOR signaling, and mediates phosphorylation of RPTOR, which regulates mTORC1 activity and may promote rapamycin-sensitive signaling independently of the PI3K/AKT pathway. Mediates cell survival by phosphorylating the pro-apoptotic proteins BAD and DAPK1 and suppressing their pro-apoptotic function. Promotes the survival of hepatic stellate cells by phosphorylating CEBPB in response to the hepatotoxin carbon tetrachloride (CCl4). Is involved in cell cycle regulation by phosphorylating the CDK inhibitor CDKN1B, which promotes CDKN1B association with 14-3-3 proteins and prevents its translocation to the nucleus and inhibition of G1 progression. In LPS-stimulated dendritic cells, is involved in TLR4-induced macropinocytosis, and in myeloma cells, acts as effector of FGFR3-mediated transformation signaling, after direct phosphorylation at Tyr-529 by FGFR3. Negatively regulates EGF-induced MAPK1/3 phosphorylation via phosphorylation of SOS1. Phosphorylates SOS1 at 'Ser-1134' and 'Ser-1161' that create YWHAB and YWHAE binding sites and which contribute to the negative regulation of MAPK1/3 phosphorylation. Phosphorylates EPHA2 at 'Ser-897', the RPS6KA-EPHA2 signaling pathway controls cell migration. Acts as a regulator of osteoblast differentiation by mediating phosphorylation of ATF4, thereby promoting ATF4 transactivation activity. In Homo sapiens (Human), this protein is Ribosomal protein S6 kinase alpha-3 (RPS6KA3).